We begin with the raw amino-acid sequence, 430 residues long: Enolase (430 aa).

Position 163 (Gln-163) interacts with (2R)-2-phosphoglycerate. The active-site Proton donor is the Glu-205. Positions 242, 287, and 314 each coordinate Mg(2+). (2R)-2-phosphoglycerate contacts are provided by Lys-339, Arg-368, Ser-369, and Lys-390. Lys-339 acts as the Proton acceptor in catalysis.

The protein belongs to the enolase family. Mg(2+) serves as cofactor.

Its subcellular location is the cytoplasm. The protein localises to the secreted. The protein resides in the cell surface. It carries out the reaction (2R)-2-phosphoglycerate = phosphoenolpyruvate + H2O. It functions in the pathway carbohydrate degradation; glycolysis; pyruvate from D-glyceraldehyde 3-phosphate: step 4/5. Its function is as follows. Catalyzes the reversible conversion of 2-phosphoglycerate (2-PG) into phosphoenolpyruvate (PEP). It is essential for the degradation of carbohydrates via glycolysis. The chain is Enolase from Alkaliphilus metalliredigens (strain QYMF).